Consider the following 480-residue polypeptide: tRNA-2-methylthio-N(6)-dimethylallyladenosine synthase (480 aa).

One can recognise an MTTase N-terminal domain in the interval 2–118 (NRVHIKTYGC…VPGYLDNLRA (117 aa)). [4Fe-4S] cluster-binding residues include C11, C47, and C81. The disordered stretch occupies residues 145–169 (DHLLPQDSDSDSQPSTLNSQLRGAA). Residues 149–159 (PQDSDSDSQPS) are compositionally biased toward low complexity. The 235-residue stretch at 171–405 (PPPQITAFVS…LELLRQNSER (235 aa)) folds into the Radical SAM core domain. 3 residues coordinate [4Fe-4S] cluster: C185, C189, and C192. The TRAM domain occupies 408 to 470 (ALLLDTVEEV…VSTLYGELML (63 aa)).

It belongs to the methylthiotransferase family. MiaB subfamily. In terms of assembly, monomer. Requires [4Fe-4S] cluster as cofactor.

It is found in the cytoplasm. The enzyme catalyses N(6)-dimethylallyladenosine(37) in tRNA + (sulfur carrier)-SH + AH2 + 2 S-adenosyl-L-methionine = 2-methylsulfanyl-N(6)-dimethylallyladenosine(37) in tRNA + (sulfur carrier)-H + 5'-deoxyadenosine + L-methionine + A + S-adenosyl-L-homocysteine + 2 H(+). Its function is as follows. Catalyzes the methylthiolation of N6-(dimethylallyl)adenosine (i(6)A), leading to the formation of 2-methylthio-N6-(dimethylallyl)adenosine (ms(2)i(6)A) at position 37 in tRNAs that read codons beginning with uridine. In Opitutus terrae (strain DSM 11246 / JCM 15787 / PB90-1), this protein is tRNA-2-methylthio-N(6)-dimethylallyladenosine synthase.